The following is a 131-amino-acid chain: D-ribose pyranase (131 aa).

H20 serves as the catalytic Proton donor. Residues D28, H98, and 120-122 contribute to the substrate site; that span reads YSN.

The protein belongs to the RbsD / FucU family. RbsD subfamily. As to quaternary structure, homodecamer.

Its subcellular location is the cytoplasm. The enzyme catalyses beta-D-ribopyranose = beta-D-ribofuranose. It participates in carbohydrate metabolism; D-ribose degradation; D-ribose 5-phosphate from beta-D-ribopyranose: step 1/2. Functionally, catalyzes the interconversion of beta-pyran and beta-furan forms of D-ribose. This Lactobacillus gasseri (strain ATCC 33323 / DSM 20243 / BCRC 14619 / CIP 102991 / JCM 1131 / KCTC 3163 / NCIMB 11718 / NCTC 13722 / AM63) protein is D-ribose pyranase.